The primary structure comprises 530 residues: Ubiquitin carboxyl-terminal hydrolase 17-like protein 11 (530 aa).

In terms of domain architecture, USP spans 80–375 (AGLQNMGNTC…QAYVLFYIQK (296 aa)). The active-site Nucleophile is the C89. The active-site Proton acceptor is H334. Composition is skewed to basic and acidic residues over residues 382-392 (SESVSRGREPR) and 398-413 (DTDRRATQGELKRDHP). Disordered stretches follow at residues 382-413 (SESVSRGREPRALGAEDTDRRATQGELKRDHP) and 509-530 (RGRARRSKGKNKHSKRALLVCQ). Residues 510 to 524 (GRARRSKGKNKHSKR) show a composition bias toward basic residues.

It belongs to the peptidase C19 family. USP17 subfamily.

Its subcellular location is the nucleus. It is found in the endoplasmic reticulum. The catalysed reaction is Thiol-dependent hydrolysis of ester, thioester, amide, peptide and isopeptide bonds formed by the C-terminal Gly of ubiquitin (a 76-residue protein attached to proteins as an intracellular targeting signal).. Deubiquitinating enzyme that removes conjugated ubiquitin from specific proteins to regulate different cellular processes that may include cell proliferation, progression through the cell cycle, apoptosis, cell migration, and the cellular response to viral infection. This chain is Ubiquitin carboxyl-terminal hydrolase 17-like protein 11 (USP17L11), found in Homo sapiens (Human).